We begin with the raw amino-acid sequence, 230 residues long: MKPLVIFDLDGTLVDTPSGIVSAFITALRDLSMPFEDRRAIRATIGLPLEKAFGQILALPVEDERVTAAVRQYQAVFREQVLPQAPGLVFPGVVEGLALLKGQGYTLAVATSKVFASAKALLEAAGLWSYFDLVLGADMVAHPKPHPEMGLLAMSRLGADAATTAMVGDTTHDLLMAKQAGMAAIGVTWGIHTTDQLKAAEPQVIVDTFSEVVGAAHALLKLSSSPVSYC.

The active-site Nucleophile is the aspartate 8. Residues aspartate 8, aspartate 10, and aspartate 169 each contribute to the Mg(2+) site. The active-site Proton donor is the aspartate 10.

The protein belongs to the HAD-like hydrolase superfamily. It depends on Mg(2+) as a cofactor.

Functionally, part of an operon that could be involved in the biosynthesis of the blue pigment indigoidine, which is implicated in pathogenicity and protection from oxidative stress. This is Probable phosphatase IndB from Dickeya dadantii (strain 3937) (Erwinia chrysanthemi (strain 3937)).